The chain runs to 424 residues: STAM-binding protein (424 aa).

Residues 1 to 127 (MSDHGDVSLP…YTEYNEEKKK (127 aa)) are interaction with CHMP3. Phosphoserine is present on residues Ser-2 and Ser-48. The interaction with STAM stretch occupies residues 227–231 (PAKPP). A phosphoserine mark is found at Ser-243, Ser-245, and Ser-247. The 132-residue stretch at 257–388 (VVVPGRLCPQ…LTDHGLEEIS (132 aa)) folds into the MPN domain. Residues His-335, His-337, Asp-348, His-350, Cys-390, His-396, and His-398 each coordinate Zn(2+). The JAMM motif signature appears at 335–348 (HTHPTQTAFLSSVD).

Belongs to the peptidase M67C family. As to quaternary structure, interacts with STAM. Interacts with SMAD6 and SMAD7. Interacts with CHMP3; the interaction appears to relieve the autoinhibition of CHMP3. Interacts with SMURF2 and RNF11; this interaction promotes ubiquitination. Requires Zn(2+) as cofactor. Phosphorylated after BMP type I receptor activation. In terms of processing, ubiquitinated by SMURF2 in the presence of RNF11. As to expression, ubiquitously expressed.

Its subcellular location is the nucleus. The protein localises to the membrane. The protein resides in the cytoplasm. It localises to the early endosome. Its activity is regulated as follows. Inhibited by N-ethylmaleimide. Strongly and specifically inhibited by ubiquitin variants UbV(SP.2) and UbV(SP.3). Also inhibited by UbV(SP.1); an ubiquitin variant that also inhibits STAMBPL1. Zinc metalloprotease that specifically cleaves 'Lys-63'-linked polyubiquitin chains. Does not cleave 'Lys-48'-linked polyubiquitin chains. Plays a role in signal transduction for cell growth and MYC induction mediated by IL-2 and GM-CSF. Potentiates BMP (bone morphogenetic protein) signaling by antagonizing the inhibitory action of SMAD6 and SMAD7. Has a key role in regulation of cell surface receptor-mediated endocytosis and ubiquitin-dependent sorting of receptors to lysosomes. Endosomal localization of STAMBP is required for efficient EGFR degradation but not for its internalization. Involved in the negative regulation of PI3K-AKT-mTOR and RAS-MAP signaling pathways. In Homo sapiens (Human), this protein is STAM-binding protein (STAMBP).